The following is a 151-amino-acid chain: Ribosome maturation factor RimP (151 aa).

The protein belongs to the RimP family.

The protein resides in the cytoplasm. Its function is as follows. Required for maturation of 30S ribosomal subunits. The protein is Ribosome maturation factor RimP of Shewanella woodyi (strain ATCC 51908 / MS32).